The sequence spans 132 residues: Small ribosomal subunit protein uS8 (132 aa).

Belongs to the universal ribosomal protein uS8 family. Part of the 30S ribosomal subunit. Contacts proteins S5 and S12.

Its function is as follows. One of the primary rRNA binding proteins, it binds directly to 16S rRNA central domain where it helps coordinate assembly of the platform of the 30S subunit. In Xanthomonas axonopodis pv. citri (strain 306), this protein is Small ribosomal subunit protein uS8.